The following is a 304-amino-acid chain: Acetyl-coenzyme A carboxylase carboxyl transferase subunit beta (304 aa).

The CoA carboxyltransferase N-terminal domain maps to 23 to 292; the sequence is VWTKCDSCGQ…PNPEAPREGV (270 aa). 4 residues coordinate Zn(2+): Cys-27, Cys-30, Cys-46, and Cys-49. The C4-type zinc-finger motif lies at 27-49; that stretch reads CDSCGQVLYRAELERNLEVCPKC. Positions 284–304 are disordered; sequence NPEAPREGVVVPPVPDQEPEA. Pro residues predominate over residues 295-304; sequence PPVPDQEPEA.

The protein belongs to the AccD/PCCB family. Acetyl-CoA carboxylase is a heterohexamer composed of biotin carboxyl carrier protein (AccB), biotin carboxylase (AccC) and two subunits each of ACCase subunit alpha (AccA) and ACCase subunit beta (AccD). It depends on Zn(2+) as a cofactor.

It localises to the cytoplasm. The enzyme catalyses N(6)-carboxybiotinyl-L-lysyl-[protein] + acetyl-CoA = N(6)-biotinyl-L-lysyl-[protein] + malonyl-CoA. It functions in the pathway lipid metabolism; malonyl-CoA biosynthesis; malonyl-CoA from acetyl-CoA: step 1/1. In terms of biological role, component of the acetyl coenzyme A carboxylase (ACC) complex. Biotin carboxylase (BC) catalyzes the carboxylation of biotin on its carrier protein (BCCP) and then the CO(2) group is transferred by the transcarboxylase to acetyl-CoA to form malonyl-CoA. This is Acetyl-coenzyme A carboxylase carboxyl transferase subunit beta from Shigella boydii serotype 4 (strain Sb227).